A 485-amino-acid polypeptide reads, in one-letter code: MTIQHTQDLAQIRAMVPEMRRVKCIHFIGIGGAGMSGIAEVLLNEGYEITGSDLSENPVTERLVSKGATVFIGHQASNVEKASVVVVSTAINEENPEVMAARELRIPIVRRAEMLAELMRFRHGIAVAGTHGKTTTTALVTQIYSEAGLDPTFVNGGLVKSAGTNARLGSSRILIAEADESDASFLHLQPMVSIVTNIEADHMDTYGGDFETLKQTFIDFLHNLPFYGQAIVCIDDPVIRELIPRISRQVITYGFSDDADVRIENYHQEGQQGKFTVVRKGRANLDITLNIPGRHNALNASAAIAVATEDDIEDDAILKAMAGTQGTGRRFDHLGEFDTGNGHAMLVDDYGHHPTEVDVTIKAARSGWQDKRLVMIFQPHRYSRTRDLYDDFANVLEQVDVLIMLDVYAAGEKPIAGADGRSLCRTIRSRGKVDPIFVPEIEQLPSVLANVIQDGDLILTQGAGDVGKVAKQLANLELNINKMLG.

ATP is bound at residue 129 to 135 (GTHGKTT).

Belongs to the MurCDEF family.

Its subcellular location is the cytoplasm. The catalysed reaction is UDP-N-acetyl-alpha-D-muramate + L-alanine + ATP = UDP-N-acetyl-alpha-D-muramoyl-L-alanine + ADP + phosphate + H(+). It functions in the pathway cell wall biogenesis; peptidoglycan biosynthesis. In terms of biological role, cell wall formation. The polypeptide is UDP-N-acetylmuramate--L-alanine ligase (Vibrio parahaemolyticus serotype O3:K6 (strain RIMD 2210633)).